The following is a 644-amino-acid chain: Exoribonuclease 2 (644 aa).

Residues 189-516 (REDLTALDFV…NHRLLKAVIK (328 aa)) form the RNB domain. One can recognise an S1 motif domain in the interval 561-643 (DTRFAAEIVD…ETRSIIARPV (83 aa)).

Belongs to the RNR ribonuclease family. RNase II subfamily.

It localises to the cytoplasm. The enzyme catalyses Exonucleolytic cleavage in the 3'- to 5'-direction to yield nucleoside 5'-phosphates.. Involved in mRNA degradation. Hydrolyzes single-stranded polyribonucleotides processively in the 3' to 5' direction. The sequence is that of Exoribonuclease 2 from Escherichia coli O139:H28 (strain E24377A / ETEC).